The primary structure comprises 364 residues: Histidinol-phosphate aminotransferase (364 aa).

K226 carries the post-translational modification N6-(pyridoxal phosphate)lysine.

The protein belongs to the class-II pyridoxal-phosphate-dependent aminotransferase family. Histidinol-phosphate aminotransferase subfamily. As to quaternary structure, homodimer. It depends on pyridoxal 5'-phosphate as a cofactor.

The catalysed reaction is L-histidinol phosphate + 2-oxoglutarate = 3-(imidazol-4-yl)-2-oxopropyl phosphate + L-glutamate. The protein operates within amino-acid biosynthesis; L-histidine biosynthesis; L-histidine from 5-phospho-alpha-D-ribose 1-diphosphate: step 7/9. This chain is Histidinol-phosphate aminotransferase, found in Campylobacter jejuni subsp. jejuni serotype O:2 (strain ATCC 700819 / NCTC 11168).